Consider the following 157-residue polypeptide: Heavy metal-associated isoprenylated plant protein 16 (157 aa).

The 70-residue stretch at 2–71 (KQKILIRIAM…KVAFAELVSV (70 aa)) folds into the HMA domain. A disordered region spans residues 73–115 (KVEPPKDGDKKPEEEKKPEEKKPEEKKPEEKKPEPCCQPWQKP). Residues 75–106 (EPPKDGDKKPEEEKKPEEKKPEEKKPEEKKPE) are compositionally biased toward basic and acidic residues. Cys-154 is modified (cysteine methyl ester). Residue Cys-154 is the site of S-farnesyl cysteine attachment. The propeptide at 155–157 (RIM) is removed in mature form.

The protein belongs to the HIPP family.

In terms of biological role, probable heavy-metal-binding protein. This Arabidopsis thaliana (Mouse-ear cress) protein is Heavy metal-associated isoprenylated plant protein 16.